The following is a 403-amino-acid chain: Peroxisomal membrane protein PEX13 (403 aa).

A compositionally biased stretch (pro residues) spans 1 to 11; that stretch reads MASQPPPPPKP. The interval 1 to 69 is disordered; the sequence is MASQPPPPPK…SQQTGSGNLN (69 aa). Residues 1-134 are Peroxisomal matrix-facing; the sequence is MASQPPPPPK…SSRGAFQSIE (134 aa). The span at 59–69 shows a compositional bias: polar residues; the sequence is PSQQTGSGNLN. A helical membrane pass occupies residues 135–155; the sequence is SIVHAFASVSMMMDATFSAVY. Residues 145 to 233 are targeting to peroxisomes; that stretch reads MMMDATFSAV…EDRAANSAKS (89 aa). Topologically, residues 156 to 174 are cytoplasmic; the sequence is NSFRAVLDVANHFSRLKIH. Residues 175 to 192 form a helical membrane-spanning segment; the sequence is FTKVFSAFALVRTIRYLY. The tract at residues 175–196 is interaction with PEX19; it reads FTKVFSAFALVRTIRYLYRRLQ. Topologically, residues 193 to 233 are peroxisomal matrix; the sequence is RRLQWMIGLRRGLENEDLWAESEGTVACLGAEDRAANSAKS. Residues 234–254 traverse the membrane as a helical segment; the sequence is WPIFLFFAVILGGPYLIWKLL. Residues 255–403 lie on the Cytoplasmic side of the membrane; that stretch reads STHSDEVTDS…TGKNGDKQDL (149 aa). The region spanning 272–336 is the SH3 domain; it reads DDHVVARAEY…PANYVKILGK (65 aa). The residue at position 354 (Ser-354) is a Phosphoserine.

This sequence belongs to the peroxin-13 family. As to quaternary structure, interacts (via SH3 domain) with PEX14 (via SH3-binding motif); forming the PEX13-PEX14 docking complex. Interacts with PEX19.

It localises to the peroxisome membrane. Its function is as follows. Component of the PEX13-PEX14 docking complex, a translocon channel that specifically mediates the import of peroxisomal cargo proteins bound to PEX5 receptor. The PEX13-PEX14 docking complex forms a large import pore which can be opened to a diameter of about 9 nm. Mechanistically, PEX5 receptor along with cargo proteins associates with the PEX14 subunit of the PEX13-PEX14 docking complex in the cytosol, leading to the insertion of the receptor into the organelle membrane with the concomitant translocation of the cargo into the peroxisome matrix. Involved in the import of PTS1- and PTS2-type containing proteins. This is Peroxisomal membrane protein PEX13 (PEX13) from Bos taurus (Bovine).